The primary structure comprises 993 residues: UPF0182 protein ROP_64500 (993 aa).

7 helical membrane-spanning segments follow: residues 18–38, 63–83, 114–134, 174–194, 211–231, 260–280, and 288–308; these read VLLV…RLIS, LLLF…ALLL, LFGL…AQSS, WLFV…YIFG, VQLA…YWFD, KLIL…AIFL, and MATA…PLVV. The interval 904 to 948 is disordered; that stretch reads TGSVATAPSAEEGTPPETGTTPPVEQGAAPPAPTAPATPPSGTDV. The segment covering 908–926 has biased composition (low complexity); sequence ATAPSAEEGTPPETGTTPP. Residues 933-942 are compositionally biased toward pro residues; it reads PPAPTAPATP.

It belongs to the UPF0182 family.

Its subcellular location is the cell membrane. This is UPF0182 protein ROP_64500 from Rhodococcus opacus (strain B4).